We begin with the raw amino-acid sequence, 27 residues long: Conotoxin flf14a (27 aa).

Intrachain disulfides connect Cys-6–Cys-26 and Cys-10–Cys-22.

In terms of tissue distribution, expressed by the venom duct.

The protein localises to the secreted. The sequence is that of Conotoxin flf14a from Conus anabathrum floridanus (Florida cone).